Here is a 240-residue protein sequence, read N- to C-terminus: Triosephosphate isomerase (240 aa).

Residue 6–8 (NLK) coordinates substrate. The active-site Electrophile is the His-88. Glu-157 functions as the Proton acceptor in the catalytic mechanism. Substrate contacts are provided by Gly-163 and Ser-193.

This sequence belongs to the triosephosphate isomerase family. Homodimer.

The protein resides in the cytoplasm. The enzyme catalyses D-glyceraldehyde 3-phosphate = dihydroxyacetone phosphate. It functions in the pathway carbohydrate biosynthesis; gluconeogenesis. The protein operates within carbohydrate degradation; glycolysis; D-glyceraldehyde 3-phosphate from glycerone phosphate: step 1/1. Functionally, involved in the gluconeogenesis. Catalyzes stereospecifically the conversion of dihydroxyacetone phosphate (DHAP) to D-glyceraldehyde-3-phosphate (G3P). The chain is Triosephosphate isomerase from Sulfurimonas denitrificans (strain ATCC 33889 / DSM 1251) (Thiomicrospira denitrificans (strain ATCC 33889 / DSM 1251)).